A 465-amino-acid polypeptide reads, in one-letter code: Cysteine--tRNA ligase (465 aa).

Cys-27 contributes to the Zn(2+) binding site. The short motif at 29–39 (PTVYDDAHLGH) is the 'HIGH' region element. The Zn(2+) site is built by Cys-207, His-237, and Glu-241. A 'KMSKS' region motif is present at residues 269–273 (KMSKS). Lys-272 is an ATP binding site.

It belongs to the class-I aminoacyl-tRNA synthetase family. In terms of assembly, monomer. Zn(2+) serves as cofactor.

It is found in the cytoplasm. It carries out the reaction tRNA(Cys) + L-cysteine + ATP = L-cysteinyl-tRNA(Cys) + AMP + diphosphate. In Helicobacter pylori (strain J99 / ATCC 700824) (Campylobacter pylori J99), this protein is Cysteine--tRNA ligase (cysS).